A 302-amino-acid chain; its full sequence is RNA polymerase II holoenzyme cyclin-like subunit (302 aa).

A Cyclin N-terminal domain is found at 53-142 (QQLIKLGKRM…LGECEFSLIS (90 aa)).

Belongs to the cyclin family. Cyclin C subfamily. In terms of assembly, component of the srb8-11 complex, a regulatory module of the Mediator complex.

The protein resides in the nucleus. Its function is as follows. Component of the srb8-11 complex. The srb8-11 complex is a regulatory module of the Mediator complex which is itself involved in regulation of basal and activated RNA polymerase II-dependent transcription. The srb8-11 complex may be involved in the transcriptional repression of a subset of genes regulated by Mediator. It may inhibit the association of the Mediator complex with RNA polymerase II to form the holoenzyme complex. The srb8-11 complex phosphorylates the C-terminal domain (CTD) of the largest subunit of RNA polymerase II. The protein is RNA polymerase II holoenzyme cyclin-like subunit (ssn8) of Aspergillus clavatus (strain ATCC 1007 / CBS 513.65 / DSM 816 / NCTC 3887 / NRRL 1 / QM 1276 / 107).